Reading from the N-terminus, the 499-residue chain is Glutamyl-tRNA(Gln) amidotransferase subunit A, mitochondrial (499 aa).

Residues Lys61 and Ser139 each act as charge relay system in the active site. Ser163 acts as the Acyl-ester intermediate in catalysis.

Belongs to the amidase family. GatA subfamily. Subunit of the heterotrimeric GatCAB amidotransferase (AdT) complex, composed of A, B and C subunits.

The protein localises to the mitochondrion. It catalyses the reaction L-glutamyl-tRNA(Gln) + L-glutamine + ATP + H2O = L-glutaminyl-tRNA(Gln) + L-glutamate + ADP + phosphate + H(+). Its function is as follows. Allows the formation of correctly charged Gln-tRNA(Gln) through the transamidation of misacylated Glu-tRNA(Gln) in the mitochondria. The reaction takes place in the presence of glutamine and ATP through an activated gamma-phospho-Glu-tRNA(Gln). The chain is Glutamyl-tRNA(Gln) amidotransferase subunit A, mitochondrial from Coccidioides posadasii (strain C735) (Valley fever fungus).